The primary structure comprises 564 residues: Phenylalanine--tRNA ligase beta subunit (564 aa).

The B5 domain occupies 286–362 (YFQNSLKINV…IGKGLDNFKS (77 aa)). 4 residues coordinate Mg(2+): Asp340, Asp346, Glu349, and Glu350.

Belongs to the phenylalanyl-tRNA synthetase beta subunit family. Type 2 subfamily. In terms of assembly, tetramer of two alpha and two beta subunits. Requires Mg(2+) as cofactor.

It localises to the cytoplasm. The enzyme catalyses tRNA(Phe) + L-phenylalanine + ATP = L-phenylalanyl-tRNA(Phe) + AMP + diphosphate + H(+). This is Phenylalanine--tRNA ligase beta subunit from Borrelia duttonii (strain Ly).